A 114-amino-acid chain; its full sequence is Ribonuclease P protein component (114 aa).

The protein belongs to the RnpA family. As to quaternary structure, consists of a catalytic RNA component (M1 or rnpB) and a protein subunit.

It carries out the reaction Endonucleolytic cleavage of RNA, removing 5'-extranucleotides from tRNA precursor.. Its function is as follows. RNaseP catalyzes the removal of the 5'-leader sequence from pre-tRNA to produce the mature 5'-terminus. It can also cleave other RNA substrates such as 4.5S RNA. The protein component plays an auxiliary but essential role in vivo by binding to the 5'-leader sequence and broadening the substrate specificity of the ribozyme. The protein is Ribonuclease P protein component of Staphylococcus haemolyticus (strain JCSC1435).